Reading from the N-terminus, the 249-residue chain is Octanoyltransferase (249 aa).

Residues 53–234 (PDTDDEIWVV…RLIAHLDGAT (182 aa)) form the BPL/LPL catalytic domain. Substrate contacts are provided by residues 93-100 (RGGQITYH), 165-167 (ALG), and 178-180 (GLS). Cys196 acts as the Acyl-thioester intermediate in catalysis.

This sequence belongs to the LipB family.

Its subcellular location is the cytoplasm. The enzyme catalyses octanoyl-[ACP] + L-lysyl-[protein] = N(6)-octanoyl-L-lysyl-[protein] + holo-[ACP] + H(+). Its pathway is protein modification; protein lipoylation via endogenous pathway; protein N(6)-(lipoyl)lysine from octanoyl-[acyl-carrier-protein]: step 1/2. Catalyzes the transfer of endogenously produced octanoic acid from octanoyl-acyl-carrier-protein onto the lipoyl domains of lipoate-dependent enzymes. Lipoyl-ACP can also act as a substrate although octanoyl-ACP is likely to be the physiological substrate. The protein is Octanoyltransferase of Burkholderia mallei (strain NCTC 10247).